Here is a 269-residue protein sequence, read N- to C-terminus: 4-hydroxy-tetrahydrodipicolinate reductase (269 aa).

NAD(+)-binding positions include 8-13 (GAAGRM) and glutamate 34. Arginine 35 is a binding site for NADP(+). NAD(+)-binding positions include 98-100 (GTT) and 122-125 (APNY). The active-site Proton donor/acceptor is histidine 155. A (S)-2,3,4,5-tetrahydrodipicolinate-binding site is contributed by histidine 156. Residue lysine 159 is the Proton donor of the active site. Residue 165 to 166 (GT) participates in (S)-2,3,4,5-tetrahydrodipicolinate binding.

Belongs to the DapB family.

It is found in the cytoplasm. It catalyses the reaction (S)-2,3,4,5-tetrahydrodipicolinate + NAD(+) + H2O = (2S,4S)-4-hydroxy-2,3,4,5-tetrahydrodipicolinate + NADH + H(+). The catalysed reaction is (S)-2,3,4,5-tetrahydrodipicolinate + NADP(+) + H2O = (2S,4S)-4-hydroxy-2,3,4,5-tetrahydrodipicolinate + NADPH + H(+). The protein operates within amino-acid biosynthesis; L-lysine biosynthesis via DAP pathway; (S)-tetrahydrodipicolinate from L-aspartate: step 4/4. Functionally, catalyzes the conversion of 4-hydroxy-tetrahydrodipicolinate (HTPA) to tetrahydrodipicolinate. The chain is 4-hydroxy-tetrahydrodipicolinate reductase from Aliivibrio fischeri (strain ATCC 700601 / ES114) (Vibrio fischeri).